The chain runs to 465 residues: Cysteine--tRNA ligase (465 aa).

C30 is a Zn(2+) binding site. Residues I32–H42 carry the 'HIGH' region motif. Residues C214, H239, and E243 each coordinate Zn(2+). Residues K271–S275 carry the 'KMSKS' region motif. Residue K274 participates in ATP binding.

Belongs to the class-I aminoacyl-tRNA synthetase family. As to quaternary structure, monomer. Zn(2+) serves as cofactor.

It localises to the cytoplasm. It catalyses the reaction tRNA(Cys) + L-cysteine + ATP = L-cysteinyl-tRNA(Cys) + AMP + diphosphate. The polypeptide is Cysteine--tRNA ligase (Burkholderia vietnamiensis (strain G4 / LMG 22486) (Burkholderia cepacia (strain R1808))).